Here is a 476-residue protein sequence, read N- to C-terminus: Cobyric acid synthase (476 aa).

One can recognise a GATase cobBQ-type domain in the interval alanine 242 to alanine 428. Cysteine 323 serves as the catalytic Nucleophile. The active site involves histidine 420.

The protein belongs to the CobB/CobQ family. CobQ subfamily.

It participates in cofactor biosynthesis; adenosylcobalamin biosynthesis. Its function is as follows. Catalyzes amidations at positions B, D, E, and G on adenosylcobyrinic A,C-diamide. NH(2) groups are provided by glutamine, and one molecule of ATP is hydrogenolyzed for each amidation. In Janthinobacterium sp. (strain Marseille) (Minibacterium massiliensis), this protein is Cobyric acid synthase.